We begin with the raw amino-acid sequence, 356 residues long: A-type ATP synthase subunit C (356 aa).

Belongs to the V-ATPase V0D/AC39 subunit family. As to quaternary structure, has multiple subunits with at least A(3), B(3), C, D, E, F, H, I and proteolipid K(x).

The protein localises to the cell membrane. Component of the A-type ATP synthase that produces ATP from ADP in the presence of a proton gradient across the membrane. The sequence is that of A-type ATP synthase subunit C from Thermoplasma acidophilum (strain ATCC 25905 / DSM 1728 / JCM 9062 / NBRC 15155 / AMRC-C165).